We begin with the raw amino-acid sequence, 359 residues long: Protein-glutamate methylesterase/protein-glutamine glutaminase 2 (359 aa).

The 118-residue stretch at 6–123 (KVMIVDDSAL…KSFLEDASND (118 aa)) folds into the Response regulatory domain. Aspartate 57 carries the post-translational modification 4-aspartylphosphate. A CheB-type methylesterase domain is found at 167-359 (ERTTDQLVAI…GAIVGYGKSC (193 aa)). Catalysis depends on residues serine 179, histidine 205, and aspartate 301.

This sequence belongs to the CheB family. Post-translationally, phosphorylated by CheA. Phosphorylation of the N-terminal regulatory domain activates the methylesterase activity.

Its subcellular location is the cytoplasm. It catalyses the reaction [protein]-L-glutamate 5-O-methyl ester + H2O = L-glutamyl-[protein] + methanol + H(+). The enzyme catalyses L-glutaminyl-[protein] + H2O = L-glutamyl-[protein] + NH4(+). Its function is as follows. Involved in chemotaxis. Part of a chemotaxis signal transduction system that modulates chemotaxis in response to various stimuli. Catalyzes the demethylation of specific methylglutamate residues introduced into the chemoreceptors (methyl-accepting chemotaxis proteins or MCP) by CheR. Also mediates the irreversible deamidation of specific glutamine residues to glutamic acid. The polypeptide is Protein-glutamate methylesterase/protein-glutamine glutaminase 2 (Dechloromonas aromatica (strain RCB)).